A 1243-amino-acid polypeptide reads, in one-letter code: Interphotoreceptor matrix proteoglycan 2 (1243 aa).

The signal sequence occupies residues 1–27 (MIMFLPVGRMSLGILILFLTGGNLVSA). At 28 to 1106 (SEERQEPMHA…EFVSEPFVIG (1079 aa)) the chain is on the extracellular side. The interval 205-234 (GLASESSAASPQESISNEIENVTEEPTQPA) is disordered. Positions 207-220 (ASESSAASPQESIS) are enriched in low complexity. Positions 221–230 (NEIENVTEEP) are enriched in polar residues. N225 carries N-linked (GlcNAc...) asparagine glycosylation. The 115-residue stretch at 235–349 (AEQIAEFSIQ…KPTAVYTISN (115 aa)) folds into the SEA 1 domain. Residues 255 to 263 (RDPSSALYR) form a hyaluronan-binding motif involved in chondroitin sulfate A-binding region. 3 N-linked (GlcNAc...) asparagine glycosylation sites follow: N297, N316, and N366. O-linked (GalNAc...) threonine glycans are attached at residues T427, T428, and T429. The N-linked (GlcNAc...) asparagine glycan is linked to N582. O-linked (GalNAc...) threonine glycosylation is found at T701, T704, and T712. The segment covering 748 to 762 (EDMVHTESSSHKELD) has biased composition (basic and acidic residues). Residues 748–768 (EDMVHTESSSHKELDSEVPVS) form a disordered region. O-linked (GalNAc...) threonine glycosylation is found at T817 and T888. An SEA 2 domain is found at 900–1013 (GALVVFFSLR…YSLDVESGDE (114 aa)). N945 and N959 each carry an N-linked (GlcNAc...) asparagine glycan. 2 EGF-like domains span residues 1013-1054 (EANP…LPCQ) and 1055-1096 (SLCD…QHCE). 6 cysteine pairs are disulfide-bonded: C1017–C1028, C1022–C1039, C1041–C1053, C1057–C1070, C1064–C1080, and C1082–C1095. The tract at residues 1083–1091 (RVGSNWWYR) is hyaluronan-binding motif involved in chondroitin sulfate C-binding. A helical transmembrane segment spans residues 1107-1127 (ITIASVVSFLLVASAVVFFLV). The interval 1128–1136 (KMLQAQNVR) is hyaluronan-binding motif involved in chondroitin sulfate A- and C-binding. Residues 1128–1243 (KMLQAQNVRR…FVREHQMEEL (116 aa)) lie on the Cytoplasmic side of the membrane. The segment at 1139-1147 (RQRPTSSSR) is hyaluronan-binding motif involved in chondroitin sulfate C-binding. The interval 1212-1220 (KEEIQERMR) is hyaluronan-binding motif involved in chondroitin sulfate A- and C-binding motif.

Expressed in the retina (at protein level). Expressed in the pineal gland.

Its subcellular location is the photoreceptor outer segment membrane. The protein localises to the photoreceptor inner segment membrane. The protein resides in the secreted. It localises to the extracellular space. It is found in the extracellular matrix. Its subcellular location is the interphotoreceptor matrix. Chondroitin sulfate- and hyaluronan-binding proteoglycan involved in the organization of interphotoreceptor matrix; may participate in the maturation and maintenance of the light-sensitive photoreceptor outer segment. Binds heparin. The sequence is that of Interphotoreceptor matrix proteoglycan 2 (Impg2) from Mus musculus (Mouse).